Consider the following 277-residue polypeptide: Large ribosomal subunit protein uL2c (277 aa).

Disordered stretches follow at residues 36-56 and 225-259; these read NKHS…HRGG and MNSV…GSKS.

This sequence belongs to the universal ribosomal protein uL2 family. Part of the 50S ribosomal subunit.

It is found in the plastid. The protein localises to the chloroplast. This is Large ribosomal subunit protein uL2c (rpl2) from Psilotum nudum (Whisk fern).